Consider the following 801-residue polypeptide: U-box domain-containing protein 44 (801 aa).

The U-box domain occupies 22 to 101 (HIYEAFICPL…EEWRSRNDAA (80 aa)). ARM repeat units follow at residues 134–173 (RSNRHGVRNSQLIHMIIDMLKSTSHRVRYKALQTLQVVVE), 176–215 (DESKAIVAEGDTVRTLVKFLSHEPSKGREAAVSLLFELSK), 218–259 (ALCE…NMER), 261–300 (EEIVRQMASYGRLQPLLGKLLEGSPETKLSMASFLGELPL), 301–340 (NNDVKVLVAQTVGSSLVDLMRSGDMPQREAALKALNKISS), 342–386 (EGSA…NIVN), 390–429 (DFDKATLVSENRVENLLHLISNTGPAIQCKLLEVLVGLTS), 435–475 (PKVV…NLSP), and 480–521 (ELAK…ELPD).

In terms of assembly, interacts with AAO3. Binds to SD129. In terms of tissue distribution, expressed in leaves, root vasculature and guard cells.

It carries out the reaction S-ubiquitinyl-[E2 ubiquitin-conjugating enzyme]-L-cysteine + [acceptor protein]-L-lysine = [E2 ubiquitin-conjugating enzyme]-L-cysteine + N(6)-ubiquitinyl-[acceptor protein]-L-lysine.. Its pathway is protein modification; protein ubiquitination. Its function is as follows. Functions as an E3 ubiquitin-protein ligase. Prevents premature senescence probably by targeting proteins involved in this process for degradation. Promotes the degradation of AAO3 and thus represses abscisic acid (ABA) biosynthesis. In Arabidopsis thaliana (Mouse-ear cress), this protein is U-box domain-containing protein 44 (PUB44).